Consider the following 1235-residue polypeptide: Serine/threonine-protein kinase TAO2 (1235 aa).

Phosphoserine is present on S9. Positions F28–V281 constitute a Protein kinase domain. ATP is bound by residues I34–V42 and K57. Catalysis depends on D151, which acts as the Proton acceptor. Residue S181 is modified to Phosphoserine. The tract at residues Q318 to R457 is disordered. Positions S350–A374 are enriched in low complexity. The span at S375–G393 shows a compositional bias: acidic residues. Basic and acidic residues predominate over residues P394 to V409. Phosphoserine is present on S414. Coiled coils occupy residues S486–Q547 and K574–N601. Residue S656 is modified to Phosphoserine. Residues L681 to E713 are a coiled coil. Disordered regions lie at residues H732–S777, K804–V835, and Q891–P939. Positions N766 to S777 are enriched in polar residues. Residues S777, S825, and S827 each carry the phosphoserine modification. The span at P899 to G908 shows a compositional bias: acidic residues. A compositionally biased stretch (pro residues) spans P924–H934. 2 helical membrane-spanning segments follow: residues L965–L985 and A987–C1007. Residues H1011 and G1031 each carry the phosphoserine modification. 3 helical membrane passes run L1012–L1032, L1043–M1063, and Q1166–L1186. The interval L1198–R1235 is disordered.

The protein belongs to the protein kinase superfamily. STE Ser/Thr protein kinase family. STE20 subfamily. Interacts with MAP2K3 and MAP2K6. Self-associates. Interacts with tubulins through the C-terminal domain. Interacts with MAP3K7 and interferes with MAP3K7-binding to CHUK and thus prevents NF-kappa-B activation. Isoform 2 interacts with PCDH8; this complex may also include CDH2. The cofactor is Mg(2+). In terms of processing, isoforms 1 and 2 are autophosphorylated. Post-translationally, C-terminal cleavage of isoform 1 and subsequent nuclear localization requires CASP9 activity. Autophosphorylated. Phosphorylated by ATM. In terms of processing, phosphorylated on Ser-1031 by MAPK14. This phosphorylation is required PCDH8 for endocytosis. As to expression, ubiquitously expressed, with a higher level of expression in testis and brain.

It is found in the cytoplasmic vesicle membrane. The protein resides in the cytoplasm. Its subcellular location is the cytoskeleton. The protein localises to the nucleus. It localises to the cell projection. It is found in the dendrite. It catalyses the reaction L-seryl-[protein] + ATP = O-phospho-L-seryl-[protein] + ADP + H(+). The catalysed reaction is L-threonyl-[protein] + ATP = O-phospho-L-threonyl-[protein] + ADP + H(+). Its activity is regulated as follows. Selectively inhibited by the enantiopure organoruthenium inhibitor 9E1. Activated following arsenic trioxide (As(2)O(3)) treatment. Its function is as follows. Serine/threonine-protein kinase involved in different processes such as membrane blebbing and apoptotic bodies formation DNA damage response and MAPK14/p38 MAPK stress-activated MAPK cascade. Phosphorylates itself, MBP, activated MAPK8, MAP2K3, MAP2K6 and tubulins. Activates the MAPK14/p38 MAPK signaling pathway through the specific activation and phosphorylation of the upstream MAP2K3 and MAP2K6 kinases. In response to DNA damage, involved in the G2/M transition DNA damage checkpoint by activating the p38/MAPK14 stress-activated MAPK cascade, probably by mediating phosphorylation of upstream MAP2K3 and MAP2K6 kinases. Isoform 1, but not isoform 2, plays a role in apoptotic morphological changes, including cell contraction, membrane blebbing and apoptotic bodies formation. This function, which requires the activation of MAPK8/JNK and nuclear localization of C-terminally truncated isoform 1, may be linked to the mitochondrial CASP9-associated death pathway. Isoform 1 binds to microtubules and affects their organization and stability independently of its kinase activity. Prevents MAP3K7-mediated activation of CHUK, and thus NF-kappa-B activation, but not that of MAPK8/JNK. May play a role in the osmotic stress-MAPK8 pathway. Isoform 2, but not isoform 1, is required for PCDH8 endocytosis. Following homophilic interactions between PCDH8 extracellular domains, isoform 2 phosphorylates and activates MAPK14/p38 MAPK which in turn phosphorylates isoform 2. This process leads to PCDH8 endocytosis and CDH2 cointernalization. Both isoforms are involved in MAPK14 phosphorylation. The chain is Serine/threonine-protein kinase TAO2 (TAOK2) from Homo sapiens (Human).